A 246-amino-acid chain; its full sequence is Enolase-phosphatase E1 (246 aa).

The Mg(2+) site is built by Asp11 and Glu13. Residues 140 to 141 (SS) and Lys174 each bind substrate. Mg(2+) is bound at residue Asp199.

The protein belongs to the HAD-like hydrolase superfamily. MasA/MtnC family. In terms of assembly, monomer. Mg(2+) serves as cofactor.

The protein resides in the cytoplasm. It is found in the nucleus. The catalysed reaction is 5-methylsulfanyl-2,3-dioxopentyl phosphate + H2O = 1,2-dihydroxy-5-(methylsulfanyl)pent-1-en-3-one + phosphate. It participates in amino-acid biosynthesis; L-methionine biosynthesis via salvage pathway; L-methionine from S-methyl-5-thio-alpha-D-ribose 1-phosphate: step 3/6. It functions in the pathway amino-acid biosynthesis; L-methionine biosynthesis via salvage pathway; L-methionine from S-methyl-5-thio-alpha-D-ribose 1-phosphate: step 4/6. Bifunctional enzyme that catalyzes the enolization of 2,3-diketo-5-methylthiopentyl-1-phosphate (DK-MTP-1-P) into the intermediate 2-hydroxy-3-keto-5-methylthiopentenyl-1-phosphate (HK-MTPenyl-1-P), which is then dephosphorylated to form the acireductone 1,2-dihydroxy-3-keto-5-methylthiopentene (DHK-MTPene). The protein is Enolase-phosphatase E1 of Acyrthosiphon pisum (Pea aphid).